Consider the following 258-residue polypeptide: MQADKSEQRAVTRLCIQCALYLLQHGAESALVEELSTRLGRALGMDSVESAISSNAIVLTTIKDGECLTSTRKNSDRGINMHVVTEVQHIVIMAEHKLLDYKDVEKRFSQIKPLRYPRWLLVLMVGLSCACFCKLNNGGWDGAVVTFFASTVAMYIRQLLTHRSMHPQINFCITAFVATTISGLMLRLPAFSETPTIAMAASVLLLVPGFPLINAVADMFKGHINTGLARWAIASLLTLATCIGVVMAMTMWGLRGWA.

5 helical membrane passes run 116–137 (YPRWLLVLMVGLSCACFCKLNN), 143–160 (AVVTFFASTVAMYIRQLL), 171–191 (FCITAFVATTISGLMLRLPAF), 197–217 (IAMAASVLLLVPGFPLINAVA), and 231–251 (WAIASLLTLATCIGVVMAMTM).

The protein belongs to the ThrE exporter (TC 2.A.79) family. The transporter is composed of YjjB and YjjP.

It is found in the cell inner membrane. Functionally, involved in succinate export with YjjB. Both proteins are required for export. Participates in succinate export, but also in the export of other dicarboxylates, such as fumarate and malate. Contributes to succinate production under both aerobic and anaerobic conditions, and increases fumarate and malate production during anaerobic succinate production. The polypeptide is Probable succinate transporter subunit YjjP (Klebsiella aerogenes (strain ATCC 13048 / DSM 30053 / CCUG 1429 / JCM 1235 / KCTC 2190 / NBRC 13534 / NCIMB 10102 / NCTC 10006 / CDC 819-56) (Enterobacter aerogenes)).